The chain runs to 397 residues: Putative odorant receptor 83c (397 aa).

At 1 to 39 (MSTSESPSSRFRELSKYINSLTNLLGVDFLSPKLKFNYR) the chain is on the cytoplasmic side. A helical transmembrane segment spans residues 40–60 (TWTTIFAIANYTGFTVFTILN). Over 61-70 (NGGDWRVGLK) the chain is Extracellular. The chain crosses the membrane as a helical span at residues 71 to 90 (ASLMTGGLFHGLGKFLTCLL). Residues 91 to 136 (KHQDMRRLVLYSQSIYDEYETRGDSYHRTLNSNIDRLLGIMKIIRN) lie on the Cytoplasmic side of the membrane. A helical membrane pass occupies residues 137-157 (GYVFAFCLMELLPLAMLMYDG). The Extracellular segment spans residues 158 to 186 (TRVTAMQYLIPGLPLENNYCYVVTYMIQT). Residues 187-207 (VTMLVQGVGFYSGDLFVFLGL) form a helical membrane-spanning segment. The Cytoplasmic portion of the chain corresponds to 208–282 (TQILTFADML…ALYYELIATQ (75 aa)). The helical transmembrane segment at 283 to 299 (VLSMALAMMLSFCINLS) threads the bilayer. Topologically, residues 300–305 (SFHMPS) are extracellular. Residues 306–326 (AIFFVVSAYSMSIYCILGTIL) traverse the membrane as a helical segment. At 327-365 (EFAYDQVYESICNVTWYELSGEQRKLFGFLLRESQYPHN) the chain is on the cytoplasmic side. A helical membrane pass occupies residues 366–386 (IQILGVMSLSVRTALQIVKLI). Over 387–397 (YSVSMMMMNRA) the chain is Extracellular.

Belongs to the insect chemoreceptor superfamily. Heteromeric odorant receptor channel (TC 1.A.69) family. Or67d subfamily. Interacts with Orco. Complexes exist early in the endomembrane system in olfactory sensory neurons (OSNs), coupling these complexes to the conserved ciliary trafficking pathway. As to expression, expressed in olfactory sensory neurons in the antenna.

Its subcellular location is the cell membrane. Its function is as follows. Odorant receptor which mediates acceptance or avoidance behavior, depending on its substrates. The odorant receptor repertoire encodes a large collection of odor stimuli that vary widely in identity, intensity, and duration. May form a complex with Orco to form odorant-sensing units, providing sensitive and prolonged odorant signaling and calcium permeability. The polypeptide is Putative odorant receptor 83c (Or83c) (Drosophila melanogaster (Fruit fly)).